We begin with the raw amino-acid sequence, 599 residues long: Potassium-transporting ATPase potassium-binding subunit (599 aa).

12 helical membrane passes run 8–28 (LLALYLGALLLAAWPLGIWLA), 61–81 (WQYALALLAFNALGLLAVYAL), 133–153 (ALAVQNFLSAATGIAVVFALF), 176–196 (AWLLLPLSLVFALFLAGNGVI), 280–300 (LTNFFQMLAIFLIPAALCFAF), 311–331 (WAVLAAMTVMFVIAVVAITPA), 366–386 (INASSLFAVITTAASCGAVIA), 391–411 (FTPLGGMVPMVMMQLGEVVFG), 416–436 (GLYGMLIFAILAVFISGLMIG), 456–476 (IAILVTPILVLAGTAVAVLAG), 521–541 (LLGLAMWLGRFGVIVPVLAIA), and 563–583 (LFVLLLIGTVLLVGLLNYVPA).

It belongs to the KdpA family. In terms of assembly, the system is composed of three essential subunits: KdpA, KdpB and KdpC.

Its subcellular location is the cell inner membrane. Its function is as follows. Part of the high-affinity ATP-driven potassium transport (or Kdp) system, which catalyzes the hydrolysis of ATP coupled with the electrogenic transport of potassium into the cytoplasm. This subunit binds the periplasmic potassium ions and delivers the ions to the membrane domain of KdpB through an intramembrane tunnel. The chain is Potassium-transporting ATPase potassium-binding subunit from Polaromonas naphthalenivorans (strain CJ2).